We begin with the raw amino-acid sequence, 4151 residues long: Mycoketide-CoA synthase (4151 aa).

Residues 2–32 (VDQLQHATEALRKALVQVERLKRTNRALLER) are a coiled coil. Residues 34-457 (SEPIAIVGMS…GTNAHVIIEA (424 aa)) form the Ketosynthase family 3 (KS3) 1 domain. Module regions lie at residues 35 to 2038 (EPIA…RTEL) and 2057 to 4070 (DPIA…RREL). The active-site Acyl-thioester intermediate; for beta-ketoacyl synthase 1 activity is Cys-203. Active-site for beta-ketoacyl synthase 1 activity residues include His-338 and His-379. An acyltransferase 1 region spans residues 559 to 880 (VFVFPGQGSQ…AASAFVAGVA (322 aa)). Residue Ser-650 is the Acyl-ester intermediate; for acyltransferase 1 activity of the active site. The interval 926–1048 (HPLLGAVVDL…GILRPGSVEP (123 aa)) is N-terminal hotdog fold 1. The interval 926–1194 (HPLLGAVVDL…VARPVTERQL (269 aa)) is dehydratase 1. Residues 926 to 1195 (HPLLGAVVDL…ARPVTERQLL (270 aa)) enclose the PKS/mFAS DH 1 domain. His-958 acts as the Proton acceptor; for dehydratase activity 1 in catalysis. A C-terminal hotdog fold 1 region spans residues 1060–1195 (AVTVDVADGY…ARPVTERQLL (136 aa)). Asp-1120 serves as the catalytic Proton donor; for dehydratase activity 1. Residues 1366-1671 (GTFENLRLEP…QARHTGKVVM (306 aa)) are enoyl reductase 1. The beta-ketoacyl reductase 1 stretch occupies residues 1680 to 1858 (GTVLITGGTG…AISLGWGLWD (179 aa)). Tyr-1828 serves as the catalytic For beta-ketoacyl reductase 1 activity. Residues 1963–2038 (AVLLGLVRLH…RLASYIRTEL (76 aa)) form the Carrier 1 domain. O-(pantetheine 4'-phosphoryl)serine is present on Ser-1998. The region spanning 2056–2480 (EDPIAIVGMA…GTNAHVIIEA (425 aa)) is the Ketosynthase family 3 (KS3) 2 domain. Cys-2226 acts as the Acyl-thioester intermediate; for beta-ketoacyl synthase 2 activity in catalysis. Residues His-2361 and His-2402 each act as for beta-ketoacyl synthase 2 activity in the active site. The tract at residues 2582–2893 (VFVFPGQGSQ…AVAQGFVTGM (312 aa)) is acyltransferase 2. Ser-2672 acts as the Acyl-ester intermediate; for acyltransferase 2 activity in catalysis. The interval 2940–3062 (HALLGAVIDL…GALRAGSAEP (123 aa)) is N-terminal hotdog fold 2. The tract at residues 2940–3215 (HALLGAVIDL…ARPVTDQQLR (276 aa)) is dehydratase 2. Residues 2940 to 3215 (HALLGAVIDL…ARPVTDQQLR (276 aa)) enclose the PKS/mFAS DH 2 domain. His-2972 acts as the Proton acceptor; for dehydratase activity 2 in catalysis. A C-terminal hotdog fold 2 region spans residues 3074–3215 (AVPVEVADGY…ARPVTDQQLR (142 aa)). Asp-3135 (proton donor; for dehydratase activity 2) is an active-site residue. Residues 3395 to 3701 (GTFENLRLEL…QARHTGKVVM (307 aa)) form an enoyl reductase 2 region. A beta-ketoacyl reductase 2 region spans residues 3710–3888 (GTVLITGGTG…AISLGWGLWD (179 aa)). Tyr-3858 (for beta-ketoacyl reductase 2 activity) is an active-site residue. Positions 3995-4070 (AVLLDLVRSH…ALAGYMRREL (76 aa)) constitute a Carrier 2 domain. An O-(pantetheine 4'-phosphoryl)serine modification is found at Ser-4030.

As to quaternary structure, forms a large supramolecular assembly mediated through specific interactions between the N- and C-terminus linkers.

It catalyses the reaction a medium-chain fatty acyl-CoA + 5 (S)-methylmalonyl-CoA + 5 malonyl-CoA + 22 NADPH + 32 H(+) = a mycoketide-CoA + 10 CO2 + 22 NADP(+) + 10 CoA + 11 H2O. It functions in the pathway lipid metabolism; fatty acid metabolism. In terms of biological role, involved in the synthesis of beta-D-mannosyl phosphomycoketide (MPM), an antigenic mycobacterial polyketide. Binds a fatty acyl-CoA as a starter unit, and extends it by five rounds of alternative additions of malonyl-CoA and methylmalonyl-CoA extender units. Depending on the starter unit, the enzyme forms mycoketide-CoAs of different lengths. Shows preference for small-/medium-chain starter fatty acyl substrates. Uses a hybrid modularly iterative mechanism, by forming a supramolecular assembly to perform repetitive cycles of iterations. The sequence is that of Mycoketide-CoA synthase from Mycobacterium tuberculosis (strain ATCC 25618 / H37Rv).